We begin with the raw amino-acid sequence, 1116 residues long: Cation channel sperm-associated auxiliary subunit beta (1116 aa).

Over 1 to 1053 the chain is Extracellular; the sequence is MESPLIYVSV…QIYVDEAPLP (1053 aa). An intrachain disulfide couples Cys-35 to Cys-60. 5 N-linked (GlcNAc...) asparagine glycosylation sites follow: Asn-90, Asn-100, Asn-118, Asn-226, and Asn-321. Cys-189 and Cys-302 are disulfide-bonded. An intrachain disulfide couples Cys-330 to Cys-343. Asn-618 and Asn-690 each carry an N-linked (GlcNAc...) asparagine glycan. Cystine bridges form between Cys-718/Cys-816, Cys-829/Cys-1037, Cys-911/Cys-920, and Cys-922/Cys-937. N-linked (GlcNAc...) asparagine glycans are attached at residues Asn-913 and Asn-921. N-linked (GlcNAc...) asparagine glycans are attached at residues Asn-1010 and Asn-1015. Residues 1054–1076 traverse the membrane as a helical segment; sequence FPGHTLIAVATAVVLGGLIFIAF. Topologically, residues 1077–1116 are cytoplasmic; it reads MFQLQGIHPWRTFQRWIRRNQEKFSSISLSELIHRSKSEE.

In terms of assembly, component of the CatSper complex or CatSpermasome composed of the core pore-forming members CATSPER1, CATSPER2, CATSPER3 and CATSPER4 as well as auxiliary members CATSPERB, CATSPERG, CATSPERD, CATSPERE, CATSPERZ, C2CD6/CATSPERT, TMEM249, TMEM262 and EFCAB9. HSPA1 may be an additional auxiliary complex member. The core complex members CATSPER1, CATSPER2, CATSPER3 and CATSPER4 form a heterotetrameric channel. The auxiliary CATSPERB, CATSPERG, CATSPERD and CATSPERE subunits form a pavilion-like structure over the pore which stabilizes the complex through interactions with CATSPER4, CATSPER3, CATSPER1 and CATSPER2 respectively. TMEM262/CATSPERH interacts with CATSPERB, further stabilizing the complex. C2CD6/CATSPERT interacts at least with CATSPERD and is required for targeting the CatSper complex in the flagellar membrane.

It is found in the cell projection. The protein localises to the cilium. Its subcellular location is the flagellum membrane. In terms of biological role, auxiliary component of the CatSper complex, a complex involved in sperm cell hyperactivation. Sperm cell hyperactivation is needed for sperm motility which is essential late in the preparation of sperm for fertilization. In Homo sapiens (Human), this protein is Cation channel sperm-associated auxiliary subunit beta.